Here is a 64-residue protein sequence, read N- to C-terminus: Large ribosomal subunit protein uL29 (64 aa).

It belongs to the universal ribosomal protein uL29 family.

The sequence is that of Large ribosomal subunit protein uL29 from Psychrobacter sp. (strain PRwf-1).